The primary structure comprises 71 residues: Long neurotoxin 1 (71 aa).

5 disulfides stabilise this stretch: C3–C20, C14–C41, C26–C30, C45–C56, and C57–C62.

It belongs to the three-finger toxin family. Long-chain subfamily. Type II alpha-neurotoxin sub-subfamily. Expressed by the venom gland.

The protein resides in the secreted. Binds with high affinity to muscular (alpha-1/CHRNA1) and neuronal (alpha-7/CHRNA7) nicotinic acetylcholine receptor (nAChR) and inhibits acetylcholine from binding to the receptor, thereby impairing neuromuscular and neuronal transmission. The sequence is that of Long neurotoxin 1 from Naja naja (Indian cobra).